The primary structure comprises 669 residues: Protein BNIP5 (669 aa).

Disordered regions lie at residues 1–116 (MPRS…REAQ), 131–259 (IEEP…QDDV), 273–401 (QLEE…RASE), and 413–544 (LQSA…SPER). The span at 34–47 (RSLDRQVPRKKDPE) shows a compositional bias: basic and acidic residues. Residues 48–73 (SSNTRCPSSATCRRTASDGARSSESP) show a composition bias toward polar residues. 2 stretches are compositionally biased toward basic and acidic residues: residues 104–113 (EDTKKERLPR) and 131–148 (IEEP…KGDL). A compositionally biased stretch (basic residues) spans 158-175 (RKKSHEKRTSRKKHSHRK). Positions 285–295 (EAVPPRKPTPL) are enriched in pro residues. A Glycyl lysine isopeptide (Lys-Gly) (interchain with G-Cter in SUMO2) cross-link involves residue Lys-314. Residues 346–357 (VSSQRASTSSSL) are compositionally biased toward polar residues. Residues 390-401 (PEEKPLLDRASE) are compositionally biased toward basic and acidic residues. Residues 445–462 (SQVKKSNLRRAFSLRKHS) are compositionally biased toward basic residues. Residues 516-528 (AAGGAPAGSPGAP) are compositionally biased toward low complexity.

The polypeptide is Protein BNIP5 (Bnip5) (Mus musculus (Mouse)).